The following is a 124-amino-acid chain: Small ribosomal subunit protein uS12 (124 aa).

Residue aspartate 89 is modified to 3-methylthioaspartic acid. Positions 105–124 (QGVKNRGQARSRYGAKKEKK) are disordered. Basic residues predominate over residues 111 to 124 (GQARSRYGAKKEKK).

Belongs to the universal ribosomal protein uS12 family. As to quaternary structure, part of the 30S ribosomal subunit. Contacts proteins S8 and S17. May interact with IF1 in the 30S initiation complex.

With S4 and S5 plays an important role in translational accuracy. Functionally, interacts with and stabilizes bases of the 16S rRNA that are involved in tRNA selection in the A site and with the mRNA backbone. Located at the interface of the 30S and 50S subunits, it traverses the body of the 30S subunit contacting proteins on the other side and probably holding the rRNA structure together. The combined cluster of proteins S8, S12 and S17 appears to hold together the shoulder and platform of the 30S subunit. This is Small ribosomal subunit protein uS12 from Micrococcus luteus (Micrococcus lysodeikticus).